Reading from the N-terminus, the 445-residue chain is MLPWTALGLALSLRLALARSGAERGPPASAPRGDLMFLLDSSASVSHYEFSRVREFVGQLVAPLPLGTGALRASLVHVGSRPYTEFPFGQHSSGEAAQDAVRASAQRMGDTHTGLALVYAKEQLFAEASGARPGVPKVLVWVTDGGSSDPVGPPMQELKDLGVTVFIVSTGRGNFLELSAAASAPAEKHLHFVDVDDLHIIVQELRGSILDAMRPQQLHATEITSSGFRLAWPPLLTADSGYYVLELVPSAQPGAARRQQLPGNATDWIWAGLDPDTDYDVALVPESNVRLLRPQILRVRTRPGEAGPGASGPESGAGPAPTQLAALPAPEEAGPERIVISHARPRSLRVSWAPALGSAAALGYHVQFGPLRGGEAQRVEVPAGRNCTTLQGLAPGTAYLVTVTAAFRSGRESALSAKACTPDGPRPRPRPVPRAPTPGTASREP.

The N-terminal stretch at 1-22 (MLPWTALGLALSLRLALARSGA) is a signal peptide. The VWFA domain maps to 34–213 (DLMFLLDSSA…ELRGSILDAM (180 aa)). Phosphoserine; by FAM20C occurs at positions 74 and 80. Position 83 is a phosphotyrosine (tyrosine 83). Residue serine 93 is modified to Phosphoserine; by FAM20C. A Fibronectin type-III 1 domain is found at 214-304 (RPQQLHATEI…QILRVRTRPG (91 aa)). Residue asparagine 264 is glycosylated (N-linked (GlcNAc...) asparagine). Disordered regions lie at residues 302-325 (RPGE…TQLA) and 411-445 (RESA…SREP). Residues 311-325 (SGPESGAGPAPTQLA) are compositionally biased toward low complexity. Positions 334–427 (GPERIVISHA…KACTPDGPRP (94 aa)) constitute a Fibronectin type-III 2 domain.

In terms of assembly, homodimer or homomultimer; disulfide-linked. Interacts with HSPG2. N-glycosylated.

It is found in the secreted. The protein localises to the extracellular space. It localises to the extracellular matrix. The protein resides in the basement membrane. Its function is as follows. Promotes matrix assembly. Involved in the organization of skeletal muscles and in the formation of neuromuscular junctions. This chain is von Willebrand factor A domain-containing protein 1, found in Homo sapiens (Human).